The sequence spans 165 residues: Small ribosomal subunit protein uS17m (165 aa).

This sequence belongs to the universal ribosomal protein uS17 family. As to quaternary structure, component of the mitochondrial small ribosomal subunit (mt-SSU). Mature N.crassa 74S mitochondrial ribosomes consist of a small (37S) and a large (54S) subunit. The 37S small subunit contains a 16S ribosomal RNA (16S mt-rRNA) and 32 different proteins. The 54S large subunit contains a 23S rRNA (23S mt-rRNA) and 42 different proteins. uS17m interacts with the F(1)-ATPase inhibitor IF(1) dimer.

The protein localises to the mitochondrion. Its function is as follows. Component of the mitochondrial ribosome (mitoribosome), a dedicated translation machinery responsible for the synthesis of mitochondrial genome-encoded proteins, including at least some of the essential transmembrane subunits of the mitochondrial respiratory chain. The mitoribosomes are attached to the mitochondrial inner membrane and translation products are cotranslationally integrated into the membrane. This chain is Small ribosomal subunit protein uS17m (mrps17), found in Neurospora crassa (strain ATCC 24698 / 74-OR23-1A / CBS 708.71 / DSM 1257 / FGSC 987).